A 275-amino-acid chain; its full sequence is Methylesterase 10 (275 aa).

The Acyl-ester intermediate role is filled by Ser96. Active-site charge relay system residues include Asp225 and His253.

Belongs to the AB hydrolase superfamily. Methylesterase family.

It carries out the reaction methyl (-)-jasmonate + H2O = jasmonate + methanol + H(+). It functions in the pathway plant hormone biosynthesis. Its pathway is lipid metabolism; oxylipin biosynthesis. In terms of biological role, methylesterase shown to have methyl jasmonate (MeJA) esterase activity in vitro. The sequence is that of Methylesterase 10 from Arabidopsis thaliana (Mouse-ear cress).